A 618-amino-acid chain; its full sequence is UvrABC system protein C (618 aa).

One can recognise a GIY-YIG domain in the interval 13–92 (DKPGVYLMKN…IKKYRPKYNI (80 aa)). In terms of domain architecture, UVR spans 204 to 239 (LDIVENFKLNMEKAAGNLEFEKAAMLRDKINIIEKI).

It belongs to the UvrC family. Interacts with UvrB in an incision complex.

It localises to the cytoplasm. In terms of biological role, the UvrABC repair system catalyzes the recognition and processing of DNA lesions. UvrC both incises the 5' and 3' sides of the lesion. The N-terminal half is responsible for the 3' incision and the C-terminal half is responsible for the 5' incision. The polypeptide is UvrABC system protein C (Clostridium botulinum (strain 657 / Type Ba4)).